The sequence spans 461 residues: ATP synthase subunit beta (461 aa).

151–158 (GGAGVGKT) is an ATP binding site.

Belongs to the ATPase alpha/beta chains family. F-type ATPases have 2 components, CF(1) - the catalytic core - and CF(0) - the membrane proton channel. CF(1) has five subunits: alpha(3), beta(3), gamma(1), delta(1), epsilon(1). CF(0) has three main subunits: a(1), b(2) and c(9-12). The alpha and beta chains form an alternating ring which encloses part of the gamma chain. CF(1) is attached to CF(0) by a central stalk formed by the gamma and epsilon chains, while a peripheral stalk is formed by the delta and b chains.

It is found in the cell inner membrane. It carries out the reaction ATP + H2O + 4 H(+)(in) = ADP + phosphate + 5 H(+)(out). Its function is as follows. Produces ATP from ADP in the presence of a proton gradient across the membrane. The catalytic sites are hosted primarily by the beta subunits. The protein is ATP synthase subunit beta of Coxiella burnetii (strain RSA 331 / Henzerling II).